Consider the following 227-residue polypeptide: Mitochondrial inner membrane protease ATP23 (227 aa).

His124 is an a divalent metal cation binding site. Residue Glu125 is part of the active site. His128 is an a divalent metal cation binding site.

Belongs to the peptidase M76 family. Interacts with ATP6.

Its subcellular location is the mitochondrion inner membrane. Has a dual role in the assembly of mitochondrial ATPase. Acts as a protease that removes the N-terminal 10 residues of mitochondrial ATPase CF(0) subunit 6 (ATP6) at the intermembrane space side. Also involved in the correct assembly of the membrane-embedded ATPase CF(0) particle, probably mediating association of ATP6 with the subunit 9 ring. The chain is Mitochondrial inner membrane protease ATP23 (ATP23) from Saccharomyces cerevisiae (strain YJM789) (Baker's yeast).